A 1530-amino-acid polypeptide reads, in one-letter code: Multidrug resistance-associated protein 1 (1530 aa).

Topologically, residues 1-33 (MALRDFCSVDGSDLFWEWNVTWNTSNPDFTKCF) are extracellular. N-linked (GlcNAc...) asparagine glycosylation is present at N19. A helical transmembrane segment spans residues 34-54 (QNTVLVWVPCSYLWVCFPFYF). At 55–74 (LYLSHHDRGYIQMTHLNKAK) the chain is on the cytoplasmic side. Residues 75 to 95 (TALGFLLWIVCWADLFYSFWE) form a helical membrane-spanning segment. Topologically, residues 96–100 (RSMGK) are extracellular. A helical membrane pass occupies residues 101-121 (LLAPVFLVSPTLLGITMLLAT). Over 122 to 133 (FLIQIERRRGVQ) the chain is Cytoplasmic. The chain crosses the membrane as a helical span at residues 134 to 154 (SSGIMLTFWLIALLCALAILR). Residues 155–172 (SKIMTALKEDARVDVFRD) lie on the Extracellular side of the membrane. Residues 173–193 (VTFYIYFSLVLIQLVLSCFSD) form a helical membrane-spanning segment. Over 194 to 316 (RSPLFSETIN…KERDPSLFKV (123 aa)) the chain is Cytoplasmic. Y277 is modified (phosphotyrosine). S289 is modified (phosphoserine). The chain crosses the membrane as a helical span at residues 317 to 337 (LYKTFGPYFLMSFLFKAVHDL). Residues 325–608 (FLMSFLFKAV…LPMVISSIVQ (284 aa)) form the ABC transmembrane type-1 1 domain. Residues 338–363 (MMFAGPEILKLLINFVNDKKAPEWQG) lie on the Extracellular side of the membrane. Residues 364-384 (YFYTALLFISACLQTLVLHQY) form a helical membrane-spanning segment. Topologically, residues 385–440 (FHICFVSGMRIKTAVIGAVYRKALVITNAARKSSTVGEIVNLMSVDAQRFMDLATY) are cytoplasmic. The chain crosses the membrane as a helical span at residues 441-461 (INMIWSAPLQVILALYLLWLN). Over 462–464 (LGP) the chain is Extracellular. A helical transmembrane segment spans residues 465–485 (SVLAGVAVMVLMVPLNAVMAM). The Cytoplasmic portion of the chain corresponds to 486–547 (KTKTYQVAHM…VLKKSAYLAA (62 aa)). K503 carries the post-translational modification N6-succinyllysine. A helical membrane pass occupies residues 548–568 (VGTFTWVCTPFLVALSTFAVY). Over 569–590 (VTVDENNILDAQKAFVSLALFN) the chain is Extracellular. The chain crosses the membrane as a helical span at residues 591 to 611 (ILRFPLNILPMVISSIVQASV). The Cytoplasmic segment spans residues 612–966 (SLKRLRVFLS…VKLSVYWDYM (355 aa)). The ABC transporter 1 domain maps to 644-868 (ITVKNATFTW…DGAFAEFLRT (225 aa)). 678-685 (GQVGCGKS) contacts ATP. Residues 912 to 939 (RQLSSSSSYSRDVSQHHTSTAELRKPGP) form a disordered region. S915 and S930 each carry phosphoserine. A helical membrane pass occupies residues 967–987 (KAIGLFISFLSIFLFLCNHVA). Positions 974-1255 (SFLSIFLFLC…LVRMSSEMET (282 aa)) constitute an ABC transmembrane type-1 2 domain. The Extracellular portion of the chain corresponds to 988–1024 (SLVSNYWLSLWTDDPIVNGTQEHTQVRLSVYGALGIS). N1005 is a glycosylation site (N-linked (GlcNAc...) asparagine). Residues 1025–1045 (QGITVFGYSMAVSIGGIFASR) form a helical membrane-spanning segment. Over 1046 to 1088 (RLHLDLLHNVLRSPISFFERTPSGNLVNRFSKELDTVDSMIPQ) the chain is Cytoplasmic. The chain crosses the membrane as a helical span at residues 1089–1109 (VIKMFMGSLFNVIGACIIILL). Position 1110 (A1110) is a topological domain, extracellular. The helical transmembrane segment at 1111–1131 (TPMAAVIIPPLGLIYFFVQRF) threads the bilayer. Over 1132 to 1202 (YVASSRQLKR…VANRWLAVRL (71 aa)) the chain is Cytoplasmic. A helical membrane pass occupies residues 1203–1223 (ECVGNCIVLFASLFAVISRHS). The Extracellular segment spans residues 1224–1225 (LS). The helical transmembrane segment at 1226–1246 (AGLVGLSVSYSLQVTTYLNWL) threads the bilayer. Residues 1247-1530 (VRMSSEMETN…YSMAKDSGLV (284 aa)) are Cytoplasmic-facing. Positions 1292 to 1526 (VEFRDYGLRY…RGLFYSMAKD (235 aa)) constitute an ABC transporter 2 domain. 1326–1333 (GRTGAGKS) is an ATP binding site.

It belongs to the ABC transporter superfamily. ABCC family. Conjugate transporter (TC 3.A.1.208) subfamily. Expressed in heart, spleen, lung, kidney, skeletal muscle, mammary gland and weaker in brain and liver.

It localises to the cell membrane. It is found in the basolateral cell membrane. It carries out the reaction ATP + H2O + xenobioticSide 1 = ADP + phosphate + xenobioticSide 2.. The catalysed reaction is an S-substituted glutathione(in) + ATP + H2O = an S-substituted glutathione(out) + ADP + phosphate + H(+). The enzyme catalyses sphing-4-enine 1-phosphate(in) + ATP + H2O = sphing-4-enine 1-phosphate(out) + ADP + phosphate + H(+). It catalyses the reaction leukotriene C4(in) + ATP + H2O = leukotriene C4(out) + ADP + phosphate + H(+). It carries out the reaction 17beta-estradiol 17-O-(beta-D-glucuronate)(in) + ATP + H2O = 17beta-estradiol 17-O-(beta-D-glucuronate)(out) + ADP + phosphate + H(+). The catalysed reaction is daunorubicin(in) + ATP + H2O = daunorubicin(out) + ADP + phosphate + H(+). The enzyme catalyses vincristine(in) + ATP + H2O = vincristine(out) + ADP + phosphate + H(+). It catalyses the reaction 2',3'-cGAMP(in) + ATP + H2O = 2',3'-cGAMP(out) + ADP + phosphate + H(+). It carries out the reaction S-[(2E,6E,10E)-geranylgeranyl]-L-glutathione(in) + ATP + H2O = S-[(2E,6E,10E)-geranylgeranyl]-L-glutathione(out) + ADP + phosphate + H(+). The catalysed reaction is prostaglandin A2-S-(R)-glutathione(in) + ATP + H2O = prostaglandin A2-S-(R)-glutathione(out) + ADP + phosphate + H(+). The enzyme catalyses prostaglandin A2-S-(S)-glutathione(in) + ATP + H2O = prostaglandin A2-S-(S)-glutathione(out) + ADP + phosphate + H(+). With respect to regulation, MK 571 inhibits sphingosine 1-phosphate and leukotriene C4 export. Functionally, mediates export of organic anions and drugs from the cytoplasm. Mediates ATP-dependent transport of glutathione and glutathione conjugates, leukotriene C4, estradiol-17-beta-o-glucuronide, methotrexate, antiviral drugs and other xenobiotics. Confers resistance to anticancer drugs by decreasing accumulation of drug in cells, and by mediating ATP- and GSH-dependent drug export. Hydrolyzes ATP with low efficiency. Catalyzes the export of sphingosine 1-phosphate from mast cells independently of their degranulation. Participates in inflammatory response by allowing export of leukotriene C4 from leukotriene C4-synthesizing cells. Mediates ATP-dependent, GSH-independent cyclic GMP-AMP (cGAMP) export. Thus, by limiting intracellular cGAMP concentrations negatively regulates the cGAS-STING pathway. Exports S-geranylgeranyl-glutathione (GGG) in lymphoid cells and stromal compartments of lymphoid organs. ABCC1 (via extracellular transport) with GGT5 (via GGG catabolism) establish GGG gradients within lymphoid tissues to position P2RY8-positive lymphocytes at germinal centers in lymphoid follicles and restrict their chemotactic transmigration from blood vessels to the bone marrow parenchyma. Mediates basolateral export of GSH-conjugated R- and S-prostaglandin A2 diastereomers in polarized epithelial cells. This Bos taurus (Bovine) protein is Multidrug resistance-associated protein 1.